A 177-amino-acid polypeptide reads, in one-letter code: ATP synthase subunit delta (177 aa).

The protein belongs to the ATPase delta chain family. As to quaternary structure, F-type ATPases have 2 components, F(1) - the catalytic core - and F(0) - the membrane proton channel. F(1) has five subunits: alpha(3), beta(3), gamma(1), delta(1), epsilon(1). F(0) has three main subunits: a(1), b(2) and c(10-14). The alpha and beta chains form an alternating ring which encloses part of the gamma chain. F(1) is attached to F(0) by a central stalk formed by the gamma and epsilon chains, while a peripheral stalk is formed by the delta and b chains.

The protein resides in the cell inner membrane. F(1)F(0) ATP synthase produces ATP from ADP in the presence of a proton or sodium gradient. F-type ATPases consist of two structural domains, F(1) containing the extramembraneous catalytic core and F(0) containing the membrane proton channel, linked together by a central stalk and a peripheral stalk. During catalysis, ATP synthesis in the catalytic domain of F(1) is coupled via a rotary mechanism of the central stalk subunits to proton translocation. Its function is as follows. This protein is part of the stalk that links CF(0) to CF(1). It either transmits conformational changes from CF(0) to CF(1) or is implicated in proton conduction. In Escherichia coli O81 (strain ED1a), this protein is ATP synthase subunit delta.